Here is a 325-residue protein sequence, read N- to C-terminus: Dehydrogenase/reductase SDR family member 7B (325 aa).

The Cytoplasmic segment spans residues Met1–Asp17. The helical; Signal-anchor for type II membrane protein transmembrane segment at Leu18 to Phe38 threads the bilayer. Topologically, residues Arg39 to Ser325 are lumenal. Residues Ser62 and Leu64 each coordinate NAD(+). Ser194 lines the substrate pocket. 3 residues coordinate NAD(+): Tyr207, Lys211, and Thr242. Catalysis depends on Tyr207, which acts as the Proton acceptor.

The protein belongs to the short-chain dehydrogenases/reductases (SDR) family.

It is found in the endoplasmic reticulum membrane. Its function is as follows. Putative oxidoreductase. This is Dehydrogenase/reductase SDR family member 7B (Dhrs7b) from Rattus norvegicus (Rat).